Consider the following 704-residue polypeptide: MARTTPIARYRNIGISAHIDAGKTTTTERILFYTGVNHKIGEVHDGAATMDWMEQEQERGITITSAATTAFWSGMAKQYEPHRINIIDTPGHVDFTIEVERSMRVLDGAVMVYCAVGGVQPQSETVWRQANKYKVPRIAFVNKMDRMGANFLKVVGQIKTRLGANPVPLQLAIGAEEGFTGVVDLVKMKAINWNDADQGVTFEYEDIPADMQDLADEWHQNLIESAAEASEELMEKYLGGEELTEEEIKQALRQRVLNNEIILVTCGSAFKNKGVQAMLDAVIDYLPSPVDVPAINGILDDGKDTPAERHASDDEPFSALAFKIATDPFVGNLTFFRVYSGVVNSGDTVLNSVKTARERFGRIVQMHANKREEIKEVRAGDIAAAIGLKDVTTGDTLCDPENPIILERMEFPEPVISIAVEPKTKADQEKMGLALGRLAKEDPSFRVWTDEESNQTIIAGMGELHLDIIVDRMKREFNVEANVGKPQVAYREAIRAKVTDIEGKHAKQSGGRGQYGHVVIDMYPLEPGSNPKGYEFINDIKGGVIPGEYIPAVDKGIQEQLKSGPLAGYPVVDLGVRLHFGSYHDVDSSELAFKLAASIAFKEGFKKAKPVLLEPIMKVEVETPEENTGDVIGDLSRRRGMLKGQESEVTGVKIHAEVPLSEMFGYATQLRSLTKGRASYTMEFLKYDDAPNNVAQAVIEARGK.

One can recognise a tr-type G domain in the interval 8-290 (ARYRNIGISA…AVIDYLPSPV (283 aa)). Residues 17–24 (AHIDAGKT), 88–92 (DTPGH), and 142–145 (NKMD) each bind GTP.

The protein belongs to the TRAFAC class translation factor GTPase superfamily. Classic translation factor GTPase family. EF-G/EF-2 subfamily.

The protein resides in the cytoplasm. In terms of biological role, catalyzes the GTP-dependent ribosomal translocation step during translation elongation. During this step, the ribosome changes from the pre-translocational (PRE) to the post-translocational (POST) state as the newly formed A-site-bound peptidyl-tRNA and P-site-bound deacylated tRNA move to the P and E sites, respectively. Catalyzes the coordinated movement of the two tRNA molecules, the mRNA and conformational changes in the ribosome. The polypeptide is Elongation factor G (Salmonella arizonae (strain ATCC BAA-731 / CDC346-86 / RSK2980)).